The sequence spans 226 residues: Ribonuclease HII (226 aa).

Residues 29 to 220 (GPVAGVDEAG…VVAAGVRLEQ (192 aa)) form the RNase H type-2 domain. Residues Asp35, Glu36, and Asp129 each contribute to the a divalent metal cation site.

The protein belongs to the RNase HII family. The cofactor is Mn(2+). It depends on Mg(2+) as a cofactor.

The protein resides in the cytoplasm. It catalyses the reaction Endonucleolytic cleavage to 5'-phosphomonoester.. Endonuclease that specifically degrades the RNA of RNA-DNA hybrids. This chain is Ribonuclease HII, found in Rhodococcus erythropolis (strain PR4 / NBRC 100887).